Here is a 265-residue protein sequence, read N- to C-terminus: MGLRIHFVVDPHGWCCMGLIVFVWLYNIVIIPKIVLFPHYEEGHIPGILIIIFYGISIFCLVALVRASLTDPGRLPENPKIPHAERELWELCNKCNLMRPKRSHHCSRCGHCVRRMDHHCPWINNCVGEDNHWLFLQLCFYTELLTCYALMFSFCHYYYFLPLKKRNLDLFVVRHELAIMRLAAFMGITMLVGITGLFYTQLIGIITDTTSIEKMSNCCEEISRPRKPWQQTFSEVFGTRWKILWFIPFRQRQPLRVPYHFANHV.

At 1 to 16 (MGLRIHFVVDPHGWCC) the chain is on the cytoplasmic side. Residues 17–37 (MGLIVFVWLYNIVIIPKIVLF) traverse the membrane as a helical segment. Residues 38 to 44 (PHYEEGH) are Extracellular-facing. The chain crosses the membrane as a helical span at residues 45–65 (IPGILIIIFYGISIFCLVALV). Residues 66–133 (RASLTDPGRL…NNCVGEDNHW (68 aa)) are Cytoplasmic-facing. Residues 90-140 (ELCNKCNLMRPKRSHHCSRCGHCVRRMDHHCPWINNCVGEDNHWLFLQLCF) form the DHHC domain. The active-site S-palmitoyl cysteine intermediate is the Cys-120. A helical membrane pass occupies residues 134–154 (LFLQLCFYTELLTCYALMFSF). Topologically, residues 155 to 185 (CHYYYFLPLKKRNLDLFVVRHELAIMRLAAF) are extracellular. The helical transmembrane segment at 186 to 206 (MGITMLVGITGLFYTQLIGII) threads the bilayer. At 207-265 (TDTTSIEKMSNCCEEISRPRKPWQQTFSEVFGTRWKILWFIPFRQRQPLRVPYHFANHV) the chain is on the cytoplasmic side.

This sequence belongs to the DHHC palmitoyltransferase family. As to expression, widely expressed. Expressed in Henle's layer within the hair bulb and the hair shaft cuticle (at protein level). Expression is limited to the post-mitotic lineages of inner root sheath (IRS) and cuticle.

It is found in the golgi apparatus membrane. The protein localises to the golgi apparatus. It localises to the cis-Golgi network membrane. Its subcellular location is the cell membrane. It catalyses the reaction L-cysteinyl-[protein] + hexadecanoyl-CoA = S-hexadecanoyl-L-cysteinyl-[protein] + CoA. Palmitoyltransferase that catalyzes the addition of palmitate onto various protein substrates. Palmitoylates sex steroid hormone receptors, including ESR1, PGR and AR, thereby regulating their targeting to the plasma membrane. This affects rapid intracellular signaling by sex hormones via ERK and AKT kinases and the generation of cAMP, but does not affect that mediated by their nuclear receptor. Palmitoylates FYN, regulates its localization in hair follicles and plays a key role in epidermal homeostasis and hair follicle differentiation. Through the palmitoylation of PLCB1 and the regulation of PLCB1 downstream signaling may indirectly regulate the function of the endothelial barrier and the adhesion of leukocytes to the endothelium. Also has a palmitoyltransferase activity toward ADRA1D, positively regulating its activity and expression and may thereby play a role in vascular contraction. May also palmitoylate eNOS and LCK. This Mus musculus (Mouse) protein is Palmitoyltransferase ZDHHC21.